Consider the following 240-residue polypeptide: Methylthioribulose-1-phosphate dehydratase (240 aa).

C99 serves as a coordination point for substrate. The Zn(2+) site is built by H116 and H118. The active-site Proton donor/acceptor is E145. H201 contributes to the Zn(2+) binding site.

This sequence belongs to the aldolase class II family. MtnB subfamily. Zn(2+) serves as cofactor.

The protein localises to the cytoplasm. The enzyme catalyses 5-(methylsulfanyl)-D-ribulose 1-phosphate = 5-methylsulfanyl-2,3-dioxopentyl phosphate + H2O. Its pathway is amino-acid biosynthesis; L-methionine biosynthesis via salvage pathway; L-methionine from S-methyl-5-thio-alpha-D-ribose 1-phosphate: step 2/6. Catalyzes the dehydration of methylthioribulose-1-phosphate (MTRu-1-P) into 2,3-diketo-5-methylthiopentyl-1-phosphate (DK-MTP-1-P). This chain is Methylthioribulose-1-phosphate dehydratase, found in Paracoccidioides lutzii (strain ATCC MYA-826 / Pb01) (Paracoccidioides brasiliensis).